A 426-amino-acid chain; its full sequence is Serine--tRNA ligase (426 aa).

229 to 231 (TAE) is a binding site for L-serine. ATP is bound by residues 260–262 (RTE) and Val-276. Glu-283 provides a ligand contact to L-serine. Position 350–353 (350–353 (EVTS)) interacts with ATP. Thr-386 serves as a coordination point for L-serine.

It belongs to the class-II aminoacyl-tRNA synthetase family. Type-1 seryl-tRNA synthetase subfamily. As to quaternary structure, homodimer. The tRNA molecule binds across the dimer.

The protein localises to the cytoplasm. The enzyme catalyses tRNA(Ser) + L-serine + ATP = L-seryl-tRNA(Ser) + AMP + diphosphate + H(+). The catalysed reaction is tRNA(Sec) + L-serine + ATP = L-seryl-tRNA(Sec) + AMP + diphosphate + H(+). The protein operates within aminoacyl-tRNA biosynthesis; selenocysteinyl-tRNA(Sec) biosynthesis; L-seryl-tRNA(Sec) from L-serine and tRNA(Sec): step 1/1. In terms of biological role, catalyzes the attachment of serine to tRNA(Ser). Is also able to aminoacylate tRNA(Sec) with serine, to form the misacylated tRNA L-seryl-tRNA(Sec), which will be further converted into selenocysteinyl-tRNA(Sec). The sequence is that of Serine--tRNA ligase from Rhodopirellula baltica (strain DSM 10527 / NCIMB 13988 / SH1).